The following is a 396-amino-acid chain: S-adenosylmethionine synthase (396 aa).

An ATP-binding site is contributed by H16. Position 18 (D18) interacts with Mg(2+). A K(+)-binding site is contributed by E44. L-methionine is bound by residues E57 and Q100. The tract at residues 100–110 (QSPDIAQGVDD) is flexible loop. ATP is bound by residues 174-176 (DAK), 241-242 (RF), D250, 256-257 (RK), A273, and K277. L-methionine is bound at residue D250. K281 is an L-methionine binding site.

This sequence belongs to the AdoMet synthase family. Homotetramer; dimer of dimers. The cofactor is Mg(2+). It depends on K(+) as a cofactor.

Its subcellular location is the cytoplasm. It catalyses the reaction L-methionine + ATP + H2O = S-adenosyl-L-methionine + phosphate + diphosphate. It participates in amino-acid biosynthesis; S-adenosyl-L-methionine biosynthesis; S-adenosyl-L-methionine from L-methionine: step 1/1. Its function is as follows. Catalyzes the formation of S-adenosylmethionine (AdoMet) from methionine and ATP. The overall synthetic reaction is composed of two sequential steps, AdoMet formation and the subsequent tripolyphosphate hydrolysis which occurs prior to release of AdoMet from the enzyme. This is S-adenosylmethionine synthase from Pediococcus pentosaceus (strain ATCC 25745 / CCUG 21536 / LMG 10740 / 183-1w).